The primary structure comprises 381 residues: Chaperone protein DnaJ (381 aa).

The 66-residue stretch at 5-70 (DYYEVLGVSR…DKKAAYDRYG (66 aa)) folds into the J domain. The CR-type zinc-finger motif lies at 140 to 218 (GVQKTINVPA…CHGAGRVEKE (79 aa)). Zn(2+)-binding residues include Cys153, Cys156, Cys170, Cys173, Cys192, Cys195, Cys206, and Cys209. CXXCXGXG motif repeat units follow at residues 153–160 (CDACKGTG), 170–177 (CPTCSGMG), 192–199 (CPTCNGMG), and 206–213 (CKVCHGAG).

Belongs to the DnaJ family. Homodimer. Zn(2+) is required as a cofactor.

The protein resides in the cytoplasm. Its function is as follows. Participates actively in the response to hyperosmotic and heat shock by preventing the aggregation of stress-denatured proteins and by disaggregating proteins, also in an autonomous, DnaK-independent fashion. Unfolded proteins bind initially to DnaJ; upon interaction with the DnaJ-bound protein, DnaK hydrolyzes its bound ATP, resulting in the formation of a stable complex. GrpE releases ADP from DnaK; ATP binding to DnaK triggers the release of the substrate protein, thus completing the reaction cycle. Several rounds of ATP-dependent interactions between DnaJ, DnaK and GrpE are required for fully efficient folding. Also involved, together with DnaK and GrpE, in the DNA replication of plasmids through activation of initiation proteins. This is Chaperone protein DnaJ from Cereibacter sphaeroides (strain KD131 / KCTC 12085) (Rhodobacter sphaeroides).